The sequence spans 685 residues: Ubiquitin carboxyl-terminal hydrolase BAP1 (685 aa).

The region spanning 4–235 is the UCH catalytic domain; that stretch reads GWLELESDPG…IRFNLMAVVP (232 aa). The Nucleophile role is filled by Cys-91. His-169 (proton donor) is an active-site residue. Disordered stretches follow at residues 273–325, 363–425, 440–493, and 550–579; these read AQKP…RGPV, MQEE…PGVL, LSIK…SSPV, and KVSP…EVPQ. The span at 385-394 shows a compositional bias: acidic residues; the sequence is DTDEEEEEET. The span at 450 to 493 shows a compositional bias: polar residues; the sequence is PHSQPSPTPSNESTDTASEIGSAFNSPLRSPLRSANPTRPSSPV. Over residues 556 to 574 the composition is skewed to basic and acidic residues; that stretch reads NKVEEPRESSEPDTERSRV. Positions 626-654 constitute a ULD domain; sequence NYDEFICAFISMLAQEGMLASLVEQNISV. A disordered region spans residues 659-685; it reads GVSIGRLHKQRKPDRRKRSRPYKAKRQ. The short motif at 673-678 is the Nuclear localization signal element; sequence RRKRSR.

This sequence belongs to the peptidase C12 family. BAP1 subfamily. In terms of assembly, component of the PR-DUB complex.

The protein localises to the cytoplasm. The protein resides in the nucleus. The enzyme catalyses Thiol-dependent hydrolysis of ester, thioester, amide, peptide and isopeptide bonds formed by the C-terminal Gly of ubiquitin (a 76-residue protein attached to proteins as an intracellular targeting signal).. Functionally, deubiquitinating enzyme that plays a key role in chromatin by mediating deubiquitination of histone H2A. Catalytic component of the PR-DUB complex, a complex that specifically mediates deubiquitination of histone H2A monoubiquitinated at 'Lys-119' (H2AK119ub1). The chain is Ubiquitin carboxyl-terminal hydrolase BAP1 (bap1) from Xenopus tropicalis (Western clawed frog).